A 774-amino-acid polypeptide reads, in one-letter code: Probable ubiquitin-like-specific protease 2A (774 aa).

The disordered stretch occupies residues 118 to 141; the sequence is SSLSENDEVSTGEATNPASDPHEV. Residues histidine 400, aspartate 430, and cysteine 485 contribute to the active site. The tract at residues 548-568 is disordered; that stretch reads ILPANSKSEPPHCGVSNRNDQ.

Belongs to the peptidase C48 family.

Functionally, protease that catalyzes two essential functions in the SUMO pathway: processing of full-length SUMOs to their mature forms and deconjugation of SUMO from targeted proteins. The chain is Probable ubiquitin-like-specific protease 2A (ULP2A) from Arabidopsis thaliana (Mouse-ear cress).